A 347-amino-acid polypeptide reads, in one-letter code: MQYTLKQISEHLNAKVINEPSGEVIITGLTYAEQAKENDLTLIDKQEHIKLWQNSKATAAIVSKKISKELAQVNDKPLIVVNNADLAMAKILELFSVPYPEQNGIHEKAIIDPTAKIGKNVSIGPSAYIGKNVEIGDNTIIYANVCIYNDAKVGTNCIIWPSVIIRDRTIIGHFCRLCSNCSIGSDGFGYRPSEDGRTIVRIPHIGNVVIGSFVDIGSNTCINNAKYGSTIIGDYTKIDNLVQIGHNVIIGKGCMICGQAGISGSVTIGDGVIIAGNAGIKDHTNIGSDARIGGKAGVMWDVPAGESHMGYPAYKDSELAKQWIAIRKLPETMKKLKAIAKSLNIDL.

Catalysis depends on His246, which acts as the Proton acceptor.

Belongs to the transferase hexapeptide repeat family. LpxD subfamily. In terms of assembly, homotrimer.

The enzyme catalyses a UDP-3-O-[(3R)-3-hydroxyacyl]-alpha-D-glucosamine + a (3R)-hydroxyacyl-[ACP] = a UDP-2-N,3-O-bis[(3R)-3-hydroxyacyl]-alpha-D-glucosamine + holo-[ACP] + H(+). It participates in bacterial outer membrane biogenesis; LPS lipid A biosynthesis. In terms of biological role, catalyzes the N-acylation of UDP-3-O-acylglucosamine using 3-hydroxyacyl-ACP as the acyl donor. Is involved in the biosynthesis of lipid A, a phosphorylated glycolipid that anchors the lipopolysaccharide to the outer membrane of the cell. This chain is UDP-3-O-acylglucosamine N-acyltransferase 1, found in Francisella tularensis subsp. tularensis (strain SCHU S4 / Schu 4).